The primary structure comprises 495 residues: Galactose-1-phosphate uridylyltransferase (495 aa).

It belongs to the galactose-1-phosphate uridylyltransferase type 2 family.

The protein localises to the cytoplasm. The catalysed reaction is alpha-D-galactose 1-phosphate + UDP-alpha-D-glucose = alpha-D-glucose 1-phosphate + UDP-alpha-D-galactose. It functions in the pathway carbohydrate metabolism; galactose metabolism. This chain is Galactose-1-phosphate uridylyltransferase, found in Ligilactobacillus salivarius (strain UCC118) (Lactobacillus salivarius).